The sequence spans 551 residues: Colicin E3 (551 aa).

Disordered stretches follow at residues 1–74, 243–269, and 293–320; these read MSGG…SGGG, TLSPGVTNNTDKDVRPAGFTQGGNTRD, and PDQVKQRQDEENRRQQEWDATHPVEAAE. Residues 1 to 315 are translocation (T) domain; the sequence is MSGGDGRGHN…RQQEWDATHP (315 aa). A compositionally biased stretch (gly residues) spans 20–35; it reads INGGPTGLGVGGGASD. Residues 35-39 carry the Binds to TolB motif; that stretch reads DGSGW. Residues 36–45 show a composition bias toward low complexity; it reads GSGWSSENNP. Gly residues predominate over residues 46–74; the sequence is WGGGSGSGIHWGGGSGHGNGGGNGNSGGG. The span at 296 to 320 shows a compositional bias: basic and acidic residues; sequence VKQRQDEENRRQQEWDATHPVEAAE. The stretch at 316-378 forms a coiled coil; it reads VEAAERNYER…IAEIKQFNRF (63 aa). Residues 316–450 are receptor-binding (R) domain; it reads VEAAERNYER…SAENNLNDEK (135 aa). The Hairpin motif lies at 379-385; sequence AHDPMAG. A coiled-coil region spans residues 386–450; sequence GHRMWQMAGL…SAENNLNDEK (65 aa). Residues 406-505 are disordered; it reads NKQAAFDAAA…KRWTGDKGRK (100 aa). Residues 430-472 show a composition bias toward basic and acidic residues; the sequence is ESRKKKEDKKRSAENNLNDEKNKPRKGFKDYGHDYHPAPKTEN. Residues 451–456 form a linker region; it reads NKPRKG. A ribosome inactivating activity region spans residues 455–551; sequence KGFKDYGHDY…DPKRNIKKYL (97 aa). The cytotoxic RNase (C) domain stretch occupies residues 457–551; it reads FKDYGHDYHP…DPKRNIKKYL (95 aa). His513 serves as the catalytic Proton donor. Glu517 acts as the Proton acceptor in catalysis. Residues 517 to 551 form a disordered region; sequence EGYRASDGQHLGSFDPKTGNQLKGPDPKRNIKKYL. The tract at residues 530 to 551 is binding of immunity protein; sequence FDPKTGNQLKGPDPKRNIKKYL. Arg545 is a catalytic residue.

Belongs to the cloacin colicin family. Native colicin E3 is a 1:1 complex of A chain and protein B (cognate immunity protein, Im3); protein A is 1,000-fold more active in inactivating ribosomes than the native complex. The cytotoxic fragment (residues 456-551, C95) forms a 1:1 complex with Im3. The receptor-binding (R) domain binds obliquely to its receptor BtuB without displacing BtuB's central plug; binding unfolds the R domain. The N-terminal 83 residues (T83) bind OmpF; trimeric complexes with colicin E3, BtuB and OmpF can be cross-linked and immunoprecipitated. Probably inserts into the OmpF pore as an unfolded peptide and spans the OmpF pore. In a complex with T.thermophilus 70S ribosomes, cytotoxic fragment C96 contacts 16S rRNA, 23S rRNA, mRNA, P-site tRNA and ribosomal protein uS12.

It is found in the secreted. Functionally, colicins are polypeptide toxins produced by and active against E.coli and closely related bacteria. Cleaves 16S rRNA between adenosine-1492 and guanosine-1493 (E.coli 16S rRNA numbering), releasing a 49 nucleotide (nt) 'colicin' fragment. Inactivates 70S ribosomes or 30S subunits by endonucleolytically cleaving 16S RNA at a specific site about 50 nt from its C-terminus. Produces 5'-OH-guanosine and a 2',3'-cyclic phosphate adenosine. Mixing a susceptible (e.g. strain K12 / A19) and colicin E3 producing strain results in total protein translation inhibition within 11 minutes. Its activity is inhibited by cognate immunity protein Im3. In terms of biological role, uses BtuB, the vitamin B transporter, as a receptor on the outer membrane; binds via the receptor (R) domain. Then the translocation domain (T) probably 'fishes' for its outer membrane translocon protein, OmpF. The N-terminal 83 residues (T83) can bind to and occlude OmpF channels. A complex of the cytotoxic C-terminal 96 residues (C96) plus the immunity protein does not occlude OmpF; upon complex separation from the immunity protein C96 becomes disordered and is able to bind OmpF. The N-terminus probably binds TolB and then reinserts into an empty pore of trimeric OmpF; the rest of the protein is pulled through OmpF and crosses the inner membrane, where the cytotoxic fragment is probably released by protease FtsH. In Escherichia coli, this protein is Colicin E3 (ceaC).